We begin with the raw amino-acid sequence, 249 residues long: 5'-nucleotidase SurE (249 aa).

Positions 8, 9, 39, and 91 each coordinate a divalent metal cation.

The protein belongs to the SurE nucleotidase family. A divalent metal cation is required as a cofactor.

The protein localises to the cytoplasm. It catalyses the reaction a ribonucleoside 5'-phosphate + H2O = a ribonucleoside + phosphate. Its function is as follows. Nucleotidase that shows phosphatase activity on nucleoside 5'-monophosphates. The sequence is that of 5'-nucleotidase SurE from Azotobacter vinelandii (strain DJ / ATCC BAA-1303).